Here is a 267-residue protein sequence, read N- to C-terminus: MSHFEAFMLALIQGLTEFLPVSSSAHLILPSEILGWPDQGLAFDVAVHVGTLAAVILYFRKEVVTLLSAWITSIFKGKHTAESKLTWMIALATIPACIFGLFMKDFIELYLRSAWVIATTTIIFAILLWWVDKHSEHKFDEYQTGWKRALFIGLAQAAAIIPGTSRSGATMTAALYLGFTREAAARFSFLMSIPIIVLAGSYLGLKLVTSGVPIDFSALSIGIAVSFISAYACIHAFLKLVTRVGMMPFVIYRLVLGFGLIAFLLSK.

Transmembrane regions (helical) follow at residues 39–59, 87–107, 111–131, 149–169, 189–209, 218–238, and 244–264; these read QGLA…ILYF, WMIA…KDFI, LRSA…LWWV, ALFI…RSGA, FLMS…KLVT, ALSI…HAFL, and VGMM…IAFL.

The protein belongs to the UppP family.

Its subcellular location is the cell inner membrane. It catalyses the reaction di-trans,octa-cis-undecaprenyl diphosphate + H2O = di-trans,octa-cis-undecaprenyl phosphate + phosphate + H(+). Functionally, catalyzes the dephosphorylation of undecaprenyl diphosphate (UPP). Confers resistance to bacitracin. This is Undecaprenyl-diphosphatase from Photobacterium profundum (strain SS9).